The following is a 68-amino-acid chain: Large ribosomal subunit protein uL29 (68 aa).

It belongs to the universal ribosomal protein uL29 family.

The polypeptide is Large ribosomal subunit protein uL29 (Rhodospirillum rubrum (strain ATCC 11170 / ATH 1.1.1 / DSM 467 / LMG 4362 / NCIMB 8255 / S1)).